Reading from the N-terminus, the 320-residue chain is Tyrosine recombinase Synpcc7942_B2651 (320 aa).

The region spanning 16–106 is the Core-binding (CB) domain; it reads VQDWDVLQML…ALKSLVRFSR (91 aa). Positions 127-313 constitute a Tyr recombinase domain; sequence RDTTGTTPER…RQDFQGECTE (187 aa). Residues Arg-167, Lys-193, His-264, Arg-267, and His-291 contribute to the active site. The active-site O-(3'-phospho-DNA)-tyrosine intermediate is Tyr-300.

The protein belongs to the 'phage' integrase family.

The protein resides in the cytoplasm. In terms of biological role, site-specific tyrosine recombinase, which acts by catalyzing the cutting and rejoining of the recombining DNA molecules. The protein is Tyrosine recombinase Synpcc7942_B2651 of Synechococcus elongatus (strain ATCC 33912 / PCC 7942 / FACHB-805) (Anacystis nidulans R2).